A 1246-amino-acid polypeptide reads, in one-letter code: Superkiller complex protein 2 (1246 aa).

A disordered region spans residues 220–246 (LGGGDEDENEAVGQPGGPRGDTVSASP). A phosphoserine mark is found at serine 245 and serine 256. Residues 319-475 (ILHLERHDSV…WIGRLKRRQI (157 aa)) form the Helicase ATP-binding domain. 332 to 339 (AHTSAGKT) contributes to the ATP binding site. The DEVH box signature appears at 423-426 (DEVH). The Helicase C-terminal domain occupies 585–755 (GLTSLDLTTS…LTYTMILNLL (171 aa)).

It belongs to the helicase family. SKI2 subfamily. As to quaternary structure, component of the SKI complex which consists of SKIC2, SKIC3 and SKIC8. Interacts with HBS1L isoform 2.

It is found in the nucleus. It localises to the cytoplasm. It catalyses the reaction ATP + H2O = ADP + phosphate + H(+). In terms of biological role, helicase component of the SKI complex, a multiprotein complex that assists the RNA-degrading exosome during the mRNA decay and quality-control pathways. The SKI complex catalyzes mRNA extraction from 80S ribosomal complexes in the 3'-5' direction and channels mRNA to the cytosolic exosome for degradation. SKI-mediated extraction of mRNA from stalled ribosomes allow binding of the Pelota-HBS1L complex and subsequent ribosome disassembly by ABCE1 for ribosome recycling. In the nucleus, the SKI complex associates with transcriptionally active genes in a manner dependent on PAF1 complex (PAF1C). In Homo sapiens (Human), this protein is Superkiller complex protein 2.